The chain runs to 119 residues: uncharacterized protein (119 aa).

4 helical membrane passes run 3–23, 29–49, 58–78, and 87–107; these read WVFLCLAILFEVAGTVSMKLS, LIPSLLLIFFYGGSLFFLTLT, AYAVWSGMGIVLITVVGFLFF, and VISIGLIIAGVVSLNLIEHVA.

The protein belongs to the drug/metabolite transporter (DMT) superfamily. Small multidrug resistance (SMR) (TC 2.A.7.1) family.

It localises to the cell membrane. This is an uncharacterized protein from Bacillus subtilis (strain 168).